A 139-amino-acid polypeptide reads, in one-letter code: Nucleoside diphosphate kinase (139 aa).

6 residues coordinate ATP: lysine 11, phenylalanine 59, arginine 87, threonine 93, arginine 104, and asparagine 114. Histidine 117 acts as the Pros-phosphohistidine intermediate in catalysis.

This sequence belongs to the NDK family. Homotetramer. Mg(2+) is required as a cofactor.

The protein resides in the cytoplasm. The catalysed reaction is a 2'-deoxyribonucleoside 5'-diphosphate + ATP = a 2'-deoxyribonucleoside 5'-triphosphate + ADP. It catalyses the reaction a ribonucleoside 5'-diphosphate + ATP = a ribonucleoside 5'-triphosphate + ADP. In terms of biological role, major role in the synthesis of nucleoside triphosphates other than ATP. The ATP gamma phosphate is transferred to the NDP beta phosphate via a ping-pong mechanism, using a phosphorylated active-site intermediate. The chain is Nucleoside diphosphate kinase from Pasteurella multocida (strain Pm70).